Here is a 720-residue protein sequence, read N- to C-terminus: GTPase-activating protein gyp2 (720 aa).

In terms of domain architecture, GRAM spans 20 to 85 (LDPASFFRIN…AAVRKLEREN (66 aa)). The region spanning 216 to 404 (GIPNNLRADI…RILDCLFVNG (189 aa)) is the Rab-GAP TBC domain.

It localises to the cytoplasm. The protein resides in the nucleus. Stimulates specifically the GTPase activity of ypt2 and ryh1. Inactivates ryh1 during recycling between the endosome and the Golgi compartments. In Schizosaccharomyces pombe (strain 972 / ATCC 24843) (Fission yeast), this protein is GTPase-activating protein gyp2.